A 431-amino-acid chain; its full sequence is Chaperone SurA (431 aa).

An N-terminal signal peptide occupies residues 1 to 22; sequence MNLKKLLTSAVLSISLCQSAFA. PpiC domains are found at residues 173–274 and 283–383; these read AEEY…KVQD and TTET…QLLD.

It is found in the periplasm. The enzyme catalyses [protein]-peptidylproline (omega=180) = [protein]-peptidylproline (omega=0). Its function is as follows. Chaperone involved in the correct folding and assembly of outer membrane proteins. Recognizes specific patterns of aromatic residues and the orientation of their side chains, which are found more frequently in integral outer membrane proteins. May act in both early periplasmic and late outer membrane-associated steps of protein maturation. This chain is Chaperone SurA, found in Pseudoalteromonas translucida (strain TAC 125).